Reading from the N-terminus, the 603-residue chain is F-box only protein 46 (603 aa).

Positions 18–54 (SKYSQNQPRPPSTALKPPVCPDTSSGTEPDHRPAHLE) are disordered. Phosphoserine occurs at positions 21 and 67. Disordered stretches follow at residues 113–165 (SRAS…SSGD), 235–301 (EAQR…TRAK), 332–359 (EASE…ARDC), and 412–442 (QSRG…GTTD). The residue at position 347 (threonine 347) is a Phosphothreonine. Composition is skewed to pro residues over residues 347 to 356 (TPPAPPPPPA) and 417 to 426 (EGPPEPPPAD). An F-box domain is found at 470–522 (RQYMLLLPEHVLVKIFSFLPTRALAALKCTCHHFKGIIEAFGVRATDSRWSRD).

In terms of assembly, part of a SCF (SKP1-cullin-F-box) protein ligase complex SCF(FBXO46) composed of CUL1, SKP1, RBX1 and FBXO46. Phosphorylated by ATM in response to DNA damage, promoting ubiquitination and degradation by the SCF(FBXO31) complex. In terms of processing, ATM-phosphorylated FBXO46 is ubiquitinated and degradaded by the SCF(FBXO31) complex in response to DNA damage.

Its pathway is protein modification; protein ubiquitination. Functionally, substrate-recognition component of the SCF(FBXO46) protein ligase complex, which mediates the ubiquitination and degradation of target proteins. In absence of stress, the SCF(FBXO46) complex catalyzes ubiquitination and degradation of MTOR-phosphorylated FBXO31. The sequence is that of F-box only protein 46 (Fbxo46) from Mus musculus (Mouse).